A 120-amino-acid polypeptide reads, in one-letter code: NAD(P)H-quinone oxidoreductase subunit 3, chloroplastic (120 aa).

3 helical membrane-spanning segments follow: residues 9–29 (IFWA…FISG), 64–84 (MFAL…PWAM), and 88–108 (VLGL…IVGL).

It belongs to the complex I subunit 3 family. As to quaternary structure, NDH is composed of at least 16 different subunits, 5 of which are encoded in the nucleus.

The protein localises to the plastid. It is found in the chloroplast thylakoid membrane. The enzyme catalyses a plastoquinone + NADH + (n+1) H(+)(in) = a plastoquinol + NAD(+) + n H(+)(out). It catalyses the reaction a plastoquinone + NADPH + (n+1) H(+)(in) = a plastoquinol + NADP(+) + n H(+)(out). Its function is as follows. NDH shuttles electrons from NAD(P)H:plastoquinone, via FMN and iron-sulfur (Fe-S) centers, to quinones in the photosynthetic chain and possibly in a chloroplast respiratory chain. The immediate electron acceptor for the enzyme in this species is believed to be plastoquinone. Couples the redox reaction to proton translocation, and thus conserves the redox energy in a proton gradient. The protein is NAD(P)H-quinone oxidoreductase subunit 3, chloroplastic of Jasminum nudiflorum (Winter jasmine).